The chain runs to 537 residues: Myosin-binding protein H (537 aa).

A compositionally biased stretch (low complexity) spans 1–25 (MTGKTAPAAAKKAPAAKKAPAPASK). The segment at 1 to 138 (MTGKTAPAAA…KPKEEPPSVP (138 aa)) is disordered. Basic and acidic residues predominate over residues 26–69 (KAPEPAPKEKPAPTPKEGHAPTPKEEHAPPPKEEHAPPPKEEHA). Residues 87–104 (EQPAAPAAEHAPTPTHEA) show a composition bias toward low complexity. Over residues 112-124 (PPPAAPAEAPAPE) the composition is skewed to pro residues. Positions 137–232 (VPLSLAVEEV…LEQPVLIREI (96 aa)) constitute a Fibronectin type-III 1 domain. In terms of domain architecture, Ig-like C2-type 1 spans 236 to 324 (PRIRLPRQLR…NGAEDKAILD (89 aa)). One can recognise a Fibronectin type-III 2 domain in the interval 333 to 428 (PPQNLKLVDV…AAGVAHIKKT (96 aa)). Residues 444–528 (PKFTQPLTDR…VNPLGEASVD (85 aa)) enclose the Ig-like C2-type 2 domain.

Belongs to the immunoglobulin superfamily. MyBP family. In terms of tissue distribution, skeletal muscle. Seems to be also expressed in the slow tonic ald muscle. Not detected in gizzard or heart.

Its function is as follows. Binds to myosin; probably involved in interaction with thick myofilaments in the A-band. This chain is Myosin-binding protein H (MYBPH), found in Gallus gallus (Chicken).